Consider the following 210-residue polypeptide: Prolactin (210 aa).

An N-terminal signal peptide occupies residues Met-1–Gly-23. 2 disulfides stabilise this stretch: Cys-69–Cys-183 and Cys-200–Cys-210.

This sequence belongs to the somatotropin/prolactin family. In terms of tissue distribution, pituitary gland.

It is found in the secreted. This Hypophthalmichthys nobilis (Bighead carp) protein is Prolactin (prl).